A 710-amino-acid polypeptide reads, in one-letter code: Ephexin-1 (710 aa).

2 stretches are compositionally biased toward basic and acidic residues: residues 1–11 (METRESEDLEK) and 26–41 (EPAK…KEET). The tract at residues 1–143 (METRESEDLE…PGNGATPEEW (143 aa)) is disordered. Residues 1–273 (METRESEDLE…LEILQPEEIK (273 aa)) form a regulatory region; modulates activity toward RHOA, RAC1 and CDC42 region. Composition is skewed to polar residues over residues 89–102 (ADSQ…NEPL) and 127–136 (MSESSSTPGN). Phosphotyrosine is present on Y179. Residues 194–236 (RRQQDAEIEDNTNGSPASEDTPEEEEEEEEEEEPASPPERKTL) are disordered. A compositionally biased stretch (acidic residues) spans 213–227 (DTPEEEEEEEEEEEP). The region spanning 273-457 (KLQEAMFELV…EMVVKACNEG (185 aa)) is the DH domain. Residues 489–601 (WLLKQGELQQ…WMTSLAPNRR (113 aa)) enclose the PH domain. An SH3 domain is found at 612–673 (LDCPQVQCVH…PSSMTEEILN (62 aa)). The span at 687–699 (VHKMDDPQRSQNK) shows a compositional bias: basic and acidic residues. The segment at 687–710 (VHKMDDPQRSQNKDRRKLGSRNRQ) is disordered. Basic residues predominate over residues 700–710 (DRRKLGSRNRQ).

As to quaternary structure, interacts with CDK5R1 and EPHA4; activated by EPHA4 through the CDK5 kinase. In terms of processing, src-dependent phosphorylation at Tyr-179 upon EPHA4 activation increases the guanine exchange factor activity toward RHOA. Phosphorylation by CDK5 upon EPHA4 activation by EFNA1 may regulate dendritic spine morphogenesis. As to expression, highly expressed in brain specifically in caudate nucleus and to a lower extent in amygdala and hippocampus. Also detected in lung.

The protein resides in the cytoplasm. It is found in the membrane. It localises to the cell projection. The protein localises to the growth cone. Its function is as follows. Acts as a guanine nucleotide exchange factor (GEF) which differentially activates the GTPases RHOA, RAC1 and CDC42. Plays a role in axon guidance regulating ephrin-induced growth cone collapse and dendritic spine morphogenesis. Upon activation by ephrin through EPHA4, the GEF activity switches toward RHOA resulting in its activation. Activated RHOA promotes cone retraction at the expense of RAC1- and CDC42-stimulated growth cone extension. This is Ephexin-1 (NGEF) from Homo sapiens (Human).